We begin with the raw amino-acid sequence, 544 residues long: pH-responsive protein 2 (544 aa).

The signal sequence occupies residues 1–22 (MLLKSLFPSILAATSFVSSVAA). N-linked (GlcNAc...) asparagine glycans are attached at residues N40 and N59. C72 and C101 are oxidised to a cystine. N-linked (GlcNAc...) asparagine glycosylation occurs at N147. 5 cysteine pairs are disulfide-bonded: C214/C347, C232/C263, C369/C420, C378/C444, and C397/C402. N408 carries an N-linked (GlcNAc...) asparagine glycan. A disordered region spans residues 469 to 514 (GSSGLGTVSGTVRTDTSQSTSDSGSGSSSSSSSSSSSSSSGSSGSK). S515 carries the GPI-anchor amidated serine lipid modification. The propeptide at 516 to 544 (AASIVSVNLLTKIATIGISIVVGFGLITM) is removed in mature form.

The protein belongs to the glycosyl hydrolase 72 family.

The protein resides in the cell membrane. Its function is as follows. Required for apical cell growth and plays an essential role in morphogenesis. May be integral to the pathogenic ability of the organism. The polypeptide is pH-responsive protein 2 (PHR2) (Candida albicans (strain SC5314 / ATCC MYA-2876) (Yeast)).